A 465-amino-acid polypeptide reads, in one-letter code: Trigger factor (465 aa).

The PPIase FKBP-type domain occupies 163 to 248; that stretch reads GDVINFNFKG…INKIKENQPA (86 aa). Residues 431 to 465 form a disordered region; sequence EIVNKNQNDNEIEQDKEQKDNNEEKIKQENNLENK. Residues 443-465 show a composition bias toward basic and acidic residues; sequence EQDKEQKDNNEEKIKQENNLENK.

The protein belongs to the FKBP-type PPIase family. Tig subfamily.

It localises to the cytoplasm. The catalysed reaction is [protein]-peptidylproline (omega=180) = [protein]-peptidylproline (omega=0). In terms of biological role, involved in protein export. Acts as a chaperone by maintaining the newly synthesized protein in an open conformation. Functions as a peptidyl-prolyl cis-trans isomerase. In Mesomycoplasma hyopneumoniae (strain 232) (Mycoplasma hyopneumoniae), this protein is Trigger factor.